The chain runs to 451 residues: Cyclin-dependent kinase 18 (451 aa).

5 positions are modified to phosphoserine: Ser12, Ser51, Ser66, Ser75, and Ser109. Positions 121 to 402 (YVKLDKLGEG…AEAALNHPYF (282 aa)) constitute a Protein kinase domain. Residues 127–135 (LGEGTYATV) and Lys150 contribute to the ATP site. The active-site Proton acceptor is the Asp242. Phosphoserine is present on residues Ser417 and Ser420.

The protein belongs to the protein kinase superfamily. CMGC Ser/Thr protein kinase family. CDC2/CDKX subfamily. As to expression, in brain, kidney, intestine and at a much lower level, in fetal tissues.

It catalyses the reaction L-seryl-[protein] + ATP = O-phospho-L-seryl-[protein] + ADP + H(+). It carries out the reaction L-threonyl-[protein] + ATP = O-phospho-L-threonyl-[protein] + ADP + H(+). Functionally, may play a role in signal transduction cascades in terminally differentiated cells. The protein is Cyclin-dependent kinase 18 (Cdk18) of Mus musculus (Mouse).